Reading from the N-terminus, the 354-residue chain is Probable L-ascorbate-6-phosphate lactonase UlaG (354 aa).

It belongs to the UlaG family. The cofactor is a divalent metal cation.

It localises to the cytoplasm. The enzyme catalyses L-ascorbate 6-phosphate + H2O = 3-dehydro-L-gulonate 6-phosphate. Its pathway is cofactor degradation; L-ascorbate degradation; D-xylulose 5-phosphate from L-ascorbate: step 1/4. In terms of biological role, probably catalyzes the hydrolysis of L-ascorbate-6-P into 3-keto-L-gulonate-6-P. Is essential for L-ascorbate utilization under anaerobic conditions. This is Probable L-ascorbate-6-phosphate lactonase UlaG from Escherichia coli O45:K1 (strain S88 / ExPEC).